The sequence spans 256 residues: uncharacterized protein (256 aa).

The segment covering 201–214 has biased composition (basic and acidic residues); sequence ACKEGVDSSCKEEG. Positions 201-231 are disordered; that stretch reads ACKEGVDSSCKEEGGGCEEEGSGSEEDSDDS. Residues 215 to 231 show a composition bias toward acidic residues; sequence GGCEEEGSGSEEDSDDS.

It is found in the mitochondrion. This is an uncharacterized protein from Zea mays (Maize).